A 579-amino-acid chain; its full sequence is Alpha-glucosidase (579 aa).

Catalysis depends on D212, which acts as the Nucleophile. Catalysis depends on E269, which acts as the Proton donor.

The protein belongs to the glycosyl hydrolase 13 family.

It catalyses the reaction Hydrolysis of terminal, non-reducing (1-&gt;4)-linked alpha-D-glucose residues with release of alpha-D-glucose.. This Schizosaccharomyces pombe (strain 972 / ATCC 24843) (Fission yeast) protein is Alpha-glucosidase (mal1).